We begin with the raw amino-acid sequence, 348 residues long: Quinone oxidoreductase-like protein 1 (348 aa).

Belongs to the zinc-containing alcohol dehydrogenase family. Quinone oxidoreductase subfamily. In terms of assembly, component of the FERRY complex composed of five subunits, TBCK, PPP1R21, FERRY3, CRYZL1 and GATD1 with a ratio of 1:2:1:2:4, respectively.

It is found in the early endosome. Its function is as follows. Component of the FERRY complex (Five-subunit Endosomal Rab5 and RNA/ribosome intermediary). The FERRY complex directly interacts with mRNAs and RAB5A, and functions as a RAB5A effector involved in the localization and the distribution of specific mRNAs most likely by mediating their endosomal transport. The complex recruits mRNAs and ribosomes to early endosomes through direct mRNA-interaction. This chain is Quinone oxidoreductase-like protein 1 (Cryzl1), found in Mus musculus (Mouse).